Reading from the N-terminus, the 218-residue chain is Imidazole glycerol phosphate synthase subunit HisH (218 aa).

The Glutamine amidotransferase type-1 domain occupies 5 to 213 (RLAVIDYEAG…VEFVARCSPL (209 aa)). Cys83 functions as the Nucleophile in the catalytic mechanism. Active-site residues include His188 and Glu190.

Heterodimer of HisH and HisF.

It localises to the cytoplasm. It carries out the reaction 5-[(5-phospho-1-deoxy-D-ribulos-1-ylimino)methylamino]-1-(5-phospho-beta-D-ribosyl)imidazole-4-carboxamide + L-glutamine = D-erythro-1-(imidazol-4-yl)glycerol 3-phosphate + 5-amino-1-(5-phospho-beta-D-ribosyl)imidazole-4-carboxamide + L-glutamate + H(+). It catalyses the reaction L-glutamine + H2O = L-glutamate + NH4(+). It participates in amino-acid biosynthesis; L-histidine biosynthesis; L-histidine from 5-phospho-alpha-D-ribose 1-diphosphate: step 5/9. IGPS catalyzes the conversion of PRFAR and glutamine to IGP, AICAR and glutamate. The HisH subunit catalyzes the hydrolysis of glutamine to glutamate and ammonia as part of the synthesis of IGP and AICAR. The resulting ammonia molecule is channeled to the active site of HisF. The sequence is that of Imidazole glycerol phosphate synthase subunit HisH from Synechococcus sp. (strain JA-2-3B'a(2-13)) (Cyanobacteria bacterium Yellowstone B-Prime).